A 324-amino-acid polypeptide reads, in one-letter code: MTIRSVVLGCGSYLPQRVVTNAELASRIETSDDWIVQRTGIRERHVAAEGEFTSHLAINAARAALAAADVDPQSIDLIVLGTSTPDNTFPATAVAVQDGLGIHHGAAFDLQAVCSGFVYALATADNFLRSGSFKRALVIGAETFSRILDWNDRTTCVLFGDGAGALVLDAQRQDGTSADRGVLTTHLRSDGRHKAKLYVDGGPSSTQTVGHLRMEGREVFKHAVGMITDVIVDAFEATGLSAETIDWFVPHQANKRIIDASAHKLHIAPEKVVLTVDRHGNTSAASIPLALDVAVKDGRIKKGDVVLLEAMGGGFTWGSALVRW.

Active-site residues include C114 and H251. The tract at residues 252–256 (QANKR) is ACP-binding. The active site involves N281.

This sequence belongs to the thiolase-like superfamily. FabH family. As to quaternary structure, homodimer.

The protein localises to the cytoplasm. The catalysed reaction is malonyl-[ACP] + acetyl-CoA + H(+) = 3-oxobutanoyl-[ACP] + CO2 + CoA. The protein operates within lipid metabolism; fatty acid biosynthesis. Its function is as follows. Catalyzes the condensation reaction of fatty acid synthesis by the addition to an acyl acceptor of two carbons from malonyl-ACP. Catalyzes the first condensation reaction which initiates fatty acid synthesis and may therefore play a role in governing the total rate of fatty acid production. Possesses both acetoacetyl-ACP synthase and acetyl transacylase activities. Its substrate specificity determines the biosynthesis of branched-chain and/or straight-chain of fatty acids. The polypeptide is Beta-ketoacyl-[acyl-carrier-protein] synthase III (Bradyrhizobium sp. (strain BTAi1 / ATCC BAA-1182)).